The sequence spans 385 residues: Aspartate carbamoyltransferase 2, chloroplastic (385 aa).

A chloroplast-targeting transit peptide spans 1-30 (MTASSSLFSCSMHMEVLTPKISKWPKNFVS). The carbamoyl phosphate site is built by R131 and T132. The UMP site is built by R131 and T132. L-aspartate is bound at residue K161. Carbamoyl phosphate-binding residues include R182, H210, and Q213. Residues R182 and H210 each contribute to the UMP site. Residues R243 and R305 each coordinate UMP. Positions 243 and 305 each coordinate L-aspartate. Carbamoyl phosphate is bound by residues L345 and P346.

It belongs to the aspartate/ornithine carbamoyltransferase superfamily. ATCase family. In terms of assembly, homotrimer.

Its subcellular location is the plastid. It is found in the chloroplast. It carries out the reaction carbamoyl phosphate + L-aspartate = N-carbamoyl-L-aspartate + phosphate + H(+). It participates in pyrimidine metabolism; UMP biosynthesis via de novo pathway; (S)-dihydroorotate from bicarbonate: step 2/3. With respect to regulation, feedback inhibited by UMP. In terms of biological role, catalyzes the condensation of carbamoyl phosphate and aspartate to form carbamoyl aspartate and inorganic phosphate, the committed step in the de novo pyrimidine nucleotide biosynthesis pathway. The polypeptide is Aspartate carbamoyltransferase 2, chloroplastic (PYRB2) (Pisum sativum (Garden pea)).